The following is a 183-amino-acid chain: Adenine phosphoribosyltransferase (183 aa).

This sequence belongs to the purine/pyrimidine phosphoribosyltransferase family. Homodimer.

Its subcellular location is the cytoplasm. It catalyses the reaction AMP + diphosphate = 5-phospho-alpha-D-ribose 1-diphosphate + adenine. The protein operates within purine metabolism; AMP biosynthesis via salvage pathway; AMP from adenine: step 1/1. Its function is as follows. Catalyzes a salvage reaction resulting in the formation of AMP, that is energically less costly than de novo synthesis. The polypeptide is Adenine phosphoribosyltransferase (Shewanella piezotolerans (strain WP3 / JCM 13877)).